A 396-amino-acid chain; its full sequence is MWNSSDANFSCYHESVLGYRYFAVIWGVAVAVTGTVGNVLTLLALAIRPKLRTRFNLLIANLTLADLLYCTLLQPFSVDTYLHLHWRTGAVFCRIFGLLLFTSNSVSILTLCLIALGRYLLIAHPKLFPQVFSAKGIVLALVGSWVVGVTSFAPLWNVFVLVPVVCTCSFDRMRGRPYTTILMGIYFVLGLSSVGVFYCLIHRQVKRAARALDQYGLHQASIRSHQVAGTQEAMPGHFQELDSGVASRGPSEGISSEPVSAATTQTLEGDSSEAGGQGIRKAAQQIAERSLPEVHRKPRETAGARRATDAPSEFGKVTRMCFAVFLCFALSYIPFLLLNILDARGRAPRVVHMVAANLTWLNSCINPVLYAAMNRQFRHAYGSILKRGPQSFRRFH.

Residues 1 to 21 are Extracellular-facing; it reads MWNSSDANFSCYHESVLGYRY. N-linked (GlcNAc...) asparagine glycosylation is found at N3 and N8. A helical membrane pass occupies residues 22-42; the sequence is FAVIWGVAVAVTGTVGNVLTL. Residues 43–57 are Cytoplasmic-facing; it reads LALAIRPKLRTRFNL. The helical transmembrane segment at 58 to 78 threads the bilayer; that stretch reads LIANLTLADLLYCTLLQPFSV. The Extracellular portion of the chain corresponds to 79-94; that stretch reads DTYLHLHWRTGAVFCR. Residues 95–115 traverse the membrane as a helical segment; that stretch reads IFGLLLFTSNSVSILTLCLIA. Over 116-135 the chain is Cytoplasmic; sequence LGRYLLIAHPKLFPQVFSAK. Residues 136–156 form a helical membrane-spanning segment; it reads GIVLALVGSWVVGVTSFAPLW. Residues 157–180 lie on the Extracellular side of the membrane; that stretch reads NVFVLVPVVCTCSFDRMRGRPYTT. Residues 181–201 traverse the membrane as a helical segment; the sequence is ILMGIYFVLGLSSVGVFYCLI. The Cytoplasmic portion of the chain corresponds to 202–320; that stretch reads HRQVKRAARA…PSEFGKVTRM (119 aa). Phosphoserine is present on residues S221 and S224. The interval 241–310 is disordered; the sequence is LDSGVASRGP…TAGARRATDA (70 aa). Residues 253–269 are compositionally biased toward polar residues; the sequence is GISSEPVSAATTQTLEG. Phosphothreonine is present on residues T263 and T264. Positions 290–308 are enriched in basic and acidic residues; sequence SLPEVHRKPRETAGARRAT. The helical transmembrane segment at 321 to 341 threads the bilayer; that stretch reads CFAVFLCFALSYIPFLLLNIL. Over 342 to 352 the chain is Extracellular; the sequence is DARGRAPRVVH. A helical membrane pass occupies residues 353–373; the sequence is MVAANLTWLNSCINPVLYAAM. At 374–396 the chain is on the cytoplasmic side; the sequence is NRQFRHAYGSILKRGPQSFRRFH.

The protein belongs to the G-protein coupled receptor 1 family. As to quaternary structure, interacts with ARRB2 and ARR3. In terms of processing, phosphorylated by a subset of GPR84-activating ligands. Constitutively phosphorylated at Ser-221 and Ser-224 in the absence of 2-HTP. By contrast, Thr-263 and Thr-264 are phosphorylated only following prior cell treatment with 2-HTP. As to expression, expressed predominantly in hematopoietic tissues. Expressed mainly in the bone marrow with transcripts also detected in spleen, the lymph node, liver and the lung.

It is found in the cell membrane. G protein-coupled receptor that responds endogenously to dietary fatty acids or nutrient, specifically medium-chain free fatty acid (FFA) with carbon chain lengths of C9 to C14. Capric acid (C10:0), undecanoic acid (C11:0) and lauric acid (C12:0) are the most potent agonists. In immune cells, functions as a pro-inflammatory receptor via 6-OAU and promotes the expression of pro-inflammatory mediators such as TNFalpha, IL-6 and IL-12B as well as stimulating chemotactic responses through activation of signaling mediators AKT, ERK and NF-kappa-B (by sim). In addition, triggers increased bacterial adhesion and phagocytosis in macrophages and regulates pro-inflammatory function via enhancing NLRP3 inflammasome activation. Also plays an important role in inflammation by modulating neutrophil functions. Mechanistically, promotes neutrophil chemotaxis, reactive oxygen species (ROS) production and degranulation via LYN-AKT/ERK pathway. To regulate ROS production, communicates with the two formyl peptide receptors FPR2 and FPR1 to control the NADPH oxidase activity in neutrophils. This chain is G-protein coupled receptor 84 (Gpr84), found in Mus musculus (Mouse).